The sequence spans 760 residues: DNA replication licensing factor mcm7 (760 aa).

The MCM domain occupies 353 to 559 (VYEKLAKSIA…ETDEHLAQHV (207 aa)). ATP contacts are provided by tyrosine 366, glycine 406, alanine 408, lysine 409, serine 410, asparagine 511, arginine 536, and arginine 630. An Arginine finger motif is present at residues 535–538 (SRFD).

Belongs to the MCM family. Component of the mcm2-7 complex. The complex forms a toroidal hexameric ring with the proposed subunit order mcm2-mcm6-mcm4-mcm7-mcm3-mcm5. The heterodimers of mcm4/mcm6 and mcm3/mcm5 interact with mcm2 and mcm7. Interacts with sld3 and mcm10.

It is found in the nucleus. It carries out the reaction ATP + H2O = ADP + phosphate + H(+). Its function is as follows. Acts as a component of the MCM2-7 complex (MCM complex) which is the replicative helicase essential for 'once per cell cycle' DNA replication initiation and elongation in eukaryotic cells. Core component of CDC45-MCM-GINS (CMG) helicase, the molecular machine that unwinds template DNA during replication, and around which the replisome is built. The active ATPase sites in the MCM2-7 ring are formed through the interaction surfaces of two neighboring subunits such that a critical structure of a conserved arginine finger motif is provided in trans relative to the ATP-binding site of the Walker A box of the adjacent subunit. The six ATPase active sites, however, are likely to contribute differentially to the complex helicase activity. Required for the progression of S phase. This Schizosaccharomyces pombe (strain 972 / ATCC 24843) (Fission yeast) protein is DNA replication licensing factor mcm7 (mcm7).